The following is a 56-amino-acid chain: Large ribosomal subunit protein bL33 (56 aa).

It belongs to the bacterial ribosomal protein bL33 family.

The protein is Large ribosomal subunit protein bL33 of Nocardioides sp. (strain ATCC BAA-499 / JS614).